A 918-amino-acid polypeptide reads, in one-letter code: Calcium-transporting ATPase type 2C member 1 (918 aa).

Residues 1-78 (MKVARFQKIP…EPLWKKYISQ (78 aa)) lie on the Cytoplasmic side of the membrane. The chain crosses the membrane as a helical span at residues 79–95 (FKNPLIMLLLASAVISI). Residues 96 to 99 (LMRQ) are Extracellular-facing. Residues 100-121 (FDDAVSITVAIVIVVTVAFVQE) form a helical membrane-spanning segment. Over 122 to 262 (YRSEKSLEEL…PKTPLQKSMD (141 aa)) the chain is Cytoplasmic. The chain crosses the membrane as a helical span at residues 263–282 (LLGKQLSFYSFGIIGIIMLV). Topologically, residues 283 to 294 (GWLLGKDILEMF) are extracellular. A helical membrane pass occupies residues 295 to 316 (TISVSLAVAAIPEGLPIVVTVT). The Cytoplasmic segment spans residues 317 to 699 (LALGVMRMVK…EGKGIYNNIK (383 aa)). The 4-aspartylphosphate intermediate role is filled by D349. Mg(2+) contacts are provided by D643 and D647. Residues 700–722 (NFVRFQLSTSIAALTLISLATLM) form a helical membrane-spanning segment. Over 723–727 (NFPNP) the chain is Extracellular. The chain crosses the membrane as a helical span at residues 728–751 (LNAMQILWINIIMDGPPAQSLGVE). Topologically, residues 752–775 (PVDKDVIRKPPRNWKDSILTKNLI) are cytoplasmic. Residues 776–794 (LKILVSSIIIVCGTLFVFW) form a helical membrane-spanning segment. Residues 795–801 (RELRDNV) lie on the Extracellular side of the membrane. A helical transmembrane segment spans residues 802–827 (ITPRDTTMTFTCFVFFDMFNALSSRS). The Cytoplasmic segment spans residues 828–842 (QTKSVFEIGLCSNKM). Residues 843 to 862 (FCYAVLGSIMGQLLVIYFPP) traverse the membrane as a helical segment. The Extracellular portion of the chain corresponds to 863–875 (LQKVFQTESLSIL). The helical transmembrane segment at 876–892 (DLLFLLGLTSSVCIVSE) threads the bilayer. Residues 893-918 (IIKKVERSREKVQKNAGSASSSFLEV) lie on the Cytoplasmic side of the membrane.

It belongs to the cation transport ATPase (P-type) (TC 3.A.3) family. Type IIA subfamily. In terms of assembly, monomer. Homodimer. Expressed in hippocampal neurons in the CA3 region of the Amon's horn (at protein level). Expressed in brain, heart, lung, stomach, liver, colon and mammary gland.

Its subcellular location is the golgi apparatus. The protein localises to the trans-Golgi network membrane. It localises to the golgi stack membrane. The catalysed reaction is Ca(2+)(in) + ATP + H2O = Ca(2+)(out) + ADP + phosphate + H(+). It carries out the reaction Mn(2+)(in) + ATP + H2O = Mn(2+)(out) + ADP + phosphate + H(+). Functionally, ATP-driven pump that supplies the Golgi apparatus with Ca(2+) and Mn(2+) ions, both essential cofactors for processing and trafficking of newly synthesized proteins in the secretory pathway. Within a catalytic cycle, acquires Ca(2+) or Mn(2+) ions on the cytoplasmic side of the membrane and delivers them to the lumenal side. The transfer of ions across the membrane is coupled to ATP hydrolysis and is associated with a transient phosphorylation that shifts the pump conformation from inward-facing to outward-facing state. Plays a primary role in the maintenance of Ca(2+) homeostasis in the trans-Golgi compartment with a functional impact on Golgi and post-Golgi protein sorting as well as a structural impact on cisternae morphology. Responsible for loading the Golgi stores with Ca(2+) ions in keratinocytes, contributing to keratinocyte differentiation and epidermis integrity. Participates in Ca(2+) and Mn(2+) ions uptake into the Golgi store of hippocampal neurons and regulates protein trafficking required for neural polarity. May also play a role in the maintenance of Ca(2+) and Mn(2+) homeostasis and signaling in the cytosol while preventing cytotoxicity. The polypeptide is Calcium-transporting ATPase type 2C member 1 (Mus musculus (Mouse)).